A 483-amino-acid polypeptide reads, in one-letter code: uncharacterized protein (483 aa).

This is an uncharacterized protein from Acanthamoeba polyphaga mimivirus (APMV).